Here is a 66-residue protein sequence, read N- to C-terminus: Conotoxin TsMEKL-03 (66 aa).

The first 9 residues, 1-9, serve as a signal peptide directing secretion; it reads VILLMSTQA. Positions 10–38 are excised as a propeptide; that stretch reads LIQSGVEKRSNKIKALSKRKTTAESWWEG. 3 cysteine pairs are disulfide-bonded: Cys-40–Cys-54, Cys-47–Cys-58, and Cys-53–Cys-63.

This sequence belongs to the conotoxin O2 superfamily. As to expression, expressed by the venom duct.

It is found in the secreted. In Conus tessulatus (Tessellate cone), this protein is Conotoxin TsMEKL-03.